We begin with the raw amino-acid sequence, 386 residues long: Succinyl-diaminopimelate desuccinylase (386 aa).

Residue histidine 73 coordinates Zn(2+). Aspartate 75 is an active-site residue. Residue aspartate 106 participates in Zn(2+) binding. The active-site Proton acceptor is glutamate 140. Residues glutamate 141, glutamate 169, and histidine 355 each coordinate Zn(2+).

The protein belongs to the peptidase M20A family. DapE subfamily. Homodimer. The cofactor is Zn(2+). Co(2+) is required as a cofactor.

It catalyses the reaction N-succinyl-(2S,6S)-2,6-diaminopimelate + H2O = (2S,6S)-2,6-diaminopimelate + succinate. The protein operates within amino-acid biosynthesis; L-lysine biosynthesis via DAP pathway; LL-2,6-diaminopimelate from (S)-tetrahydrodipicolinate (succinylase route): step 3/3. Its function is as follows. Catalyzes the hydrolysis of N-succinyl-L,L-diaminopimelic acid (SDAP), forming succinate and LL-2,6-diaminopimelate (DAP), an intermediate involved in the bacterial biosynthesis of lysine and meso-diaminopimelic acid, an essential component of bacterial cell walls. The polypeptide is Succinyl-diaminopimelate desuccinylase (Delftia acidovorans (strain DSM 14801 / SPH-1)).